A 340-amino-acid chain; its full sequence is MTIILATGGTGGHVFPAITLAKALKVQGHNCILFTDQKTINIESYILPLCKPSGNKLKFLFLLMYSCVLALYQTRKLKPKLIIGFGSYASFPTLLAAKILSIPIVLHEQNTVLGRVNRFFFKSAKLIATSFPETKYAEGSKCVFTGNFVDIEAQGYSRAETVLNVLIIAGSQGANFFDDVVSSVICDLPVEVKERIRVTQQCTKKNINKVKSLYKSEGIDCELSEFFDDMENKLANAHLVISRAGATSIAEITLAERPAVYIPYPHSKDNHQFYNAKHIEDSGAAVMVEQNSNAKKNLGELLVDLLQNCQKLRDMANNTKKTRIRNGVTEFIKAIAQELS.

Residues 10–12 (TGG), asparagine 110, serine 171, and glutamine 272 each bind UDP-N-acetyl-alpha-D-glucosamine.

Belongs to the glycosyltransferase 28 family. MurG subfamily.

It is found in the cell membrane. It carries out the reaction di-trans,octa-cis-undecaprenyl diphospho-N-acetyl-alpha-D-muramoyl-L-alanyl-D-glutamyl-meso-2,6-diaminopimeloyl-D-alanyl-D-alanine + UDP-N-acetyl-alpha-D-glucosamine = di-trans,octa-cis-undecaprenyl diphospho-[N-acetyl-alpha-D-glucosaminyl-(1-&gt;4)]-N-acetyl-alpha-D-muramoyl-L-alanyl-D-glutamyl-meso-2,6-diaminopimeloyl-D-alanyl-D-alanine + UDP + H(+). The protein operates within cell wall biogenesis; peptidoglycan biosynthesis. Cell wall formation. Catalyzes the transfer of a GlcNAc subunit on undecaprenyl-pyrophosphoryl-MurNAc-pentapeptide (lipid intermediate I) to form undecaprenyl-pyrophosphoryl-MurNAc-(pentapeptide)GlcNAc (lipid intermediate II). In Wolbachia pipientis subsp. Culex pipiens (strain wPip), this protein is UDP-N-acetylglucosamine--N-acetylmuramyl-(pentapeptide) pyrophosphoryl-undecaprenol N-acetylglucosamine transferase.